Here is a 618-residue protein sequence, read N- to C-terminus: Mitochondrial Rho GTPase 1 (618 aa).

The Cytoplasmic portion of the chain corresponds to 1–592 (MKKDVRILLV…TQADLKSSTF (592 aa)). In terms of domain architecture, Miro 1 spans 2 to 168 (KKDVRILLVG…FYYAQKAVLH (167 aa)). 5 residues coordinate GTP: Arg14, Gly16, Lys17, Thr18, and Ser19. Thr18 is a binding site for Mg(2+). Mg(2+) is bound by residues Pro35 and Asp57. A GTP-binding site is contributed by Ser59. Residue Lys92 is modified to N6-acetyllysine. GTP contacts are provided by Asn118, Lys119, Asp121, Ala149, and Lys150. Residue Lys153 forms a Glycyl lysine isopeptide (Lys-Gly) (interchain with G-Cter in ubiquitin) linkage. The EF-hand 1 domain occupies 184–219 (ACIKALTRIFKISDQDNDGTLNDAELNFFQRICFNT). Residues Asp197, Asp199, Asp201, Thr203, and Glu208 each contribute to the Ca(2+) site. Residue Lys235 forms a Glycyl lysine isopeptide (Lys-Gly) (interchain with G-Cter in ubiquitin) linkage. The EF-hand 2 domain maps to 304–339 (HAYLFLQSTFDKHDLDRDCALSPDELKDLFKVFPYI). Asp317, Asp319, Asp321, Ala323, and Glu328 together coordinate Ca(2+). A Miro 2 domain is found at 416-579 (RNVFRCNVIG…FVKLTTMAMY (164 aa)). 7 residues coordinate GTP: Asn428, Cys429, Gly430, Lys431, Ser432, Gly433, and Lys447. Residue Asn428 coordinates Mg(2+). Residues Asn428, Cys429, Gly430, Lys431, Ser432, Gly433, Lys447, Lys454, Ser477, Glu478, Lys528, Asp530, Thr558, Cys559, and Asn560 each contribute to the GDP site. GTP contacts are provided by Lys528, Asp530, Thr558, and Cys559. Lys572 participates in a covalent cross-link: Glycyl lysine isopeptide (Lys-Gly) (interchain with G-Cter in ubiquitin). The helical; Anchor for type IV membrane protein transmembrane segment at 593–615 (WLRASFGATVFAVLGFAMYKALL) threads the bilayer. Over 616–618 (KQR) the chain is Mitochondrial intermembrane.

It belongs to the mitochondrial Rho GTPase family. As to quaternary structure, homodimer. Interacts with the kinesin-binding proteins TRAK1/OIP106 and TRAK2/GRIF1, forming a link between mitochondria and the trafficking apparatus of the microtubules. Interacts with RAP1GDS1. Interacts with ARMCX1. Found in a complex with KIF5B, OGT, RHOT2 and TRAK1. In terms of processing, ubiquitinated by PRKN during mitophagy, leading to its degradation and enhancement of mitophagy. Deubiquitinated by USP30. Acetylation on Lys-92 decreases sensitivity of mitochondrial transport to elevated Ca(2+) levels, increases mitochondrial transport and promotes axon growth. Deacetylated by HDAC6 which blocks mitochondrial transport and mediates axon growth inhibition. In terms of tissue distribution, ubiquitously expressed. Expressed at high level in heart and skeletal muscle.

The protein localises to the mitochondrion outer membrane. The enzyme catalyses GTP + H2O = GDP + phosphate + H(+). It carries out the reaction ATP + H2O = ADP + phosphate + H(+). The catalysed reaction is UTP + H2O = UDP + phosphate + H(+). Its function is as follows. Atypical mitochondrial nucleoside-triphosphatase (NTPase) involved in mitochondrial trafficking. Probably involved in control of anterograde transport of mitochondria and their subcellular distribution. Promotes mitochondrial fission during high calcium conditions. Can hydrolyze GTP, ATP and UTP. This Homo sapiens (Human) protein is Mitochondrial Rho GTPase 1 (RHOT1).